A 481-amino-acid chain; its full sequence is 2-succinylbenzoate--CoA ligase (481 aa).

The protein belongs to the ATP-dependent AMP-binding enzyme family. MenE subfamily.

The catalysed reaction is 2-succinylbenzoate + ATP + CoA = 2-succinylbenzoyl-CoA + AMP + diphosphate. The protein operates within quinol/quinone metabolism; 1,4-dihydroxy-2-naphthoate biosynthesis; 1,4-dihydroxy-2-naphthoate from chorismate: step 5/7. It participates in quinol/quinone metabolism; menaquinone biosynthesis. Functionally, converts 2-succinylbenzoate (OSB) to 2-succinylbenzoyl-CoA (OSB-CoA). The protein is 2-succinylbenzoate--CoA ligase of Bacillus cereus (strain Q1).